Reading from the N-terminus, the 171-residue chain is Photosystem I assembly protein Ycf3 (171 aa).

TPR repeat units lie at residues 35-68, 72-105, and 120-153; these read AFTY…EIDP, SYIL…NPSL, and GEQA…APNN.

It belongs to the Ycf3 family.

The protein resides in the plastid. The protein localises to the chloroplast thylakoid membrane. Functionally, essential for the assembly of the photosystem I (PSI) complex. May act as a chaperone-like factor to guide the assembly of the PSI subunits. This Psilotum nudum (Whisk fern) protein is Photosystem I assembly protein Ycf3.